Consider the following 135-residue polypeptide: Large ribosomal subunit protein uL16c (135 aa).

It belongs to the universal ribosomal protein uL16 family. As to quaternary structure, part of the 50S ribosomal subunit.

The protein resides in the plastid. It localises to the chloroplast. The polypeptide is Large ribosomal subunit protein uL16c (Ceratophyllum demersum (Rigid hornwort)).